The primary structure comprises 109 residues: MEDRVEISLLMDFYGPLLTEKQSEIMQWYYNDDLSLAEIAELNQTSRQAIHDLIKRCYKQLLSYESKLNLLQKSINRKKEIMNFLEHLKNKYSIDDEDIIKYKEKLENL.

It belongs to the UPF0122 family.

Might take part in the signal recognition particle (SRP) pathway. This is inferred from the conservation of its genetic proximity to ftsY/ffh. May be a regulatory protein. The polypeptide is UPF0122 protein Cbei_1174 (Clostridium beijerinckii (strain ATCC 51743 / NCIMB 8052) (Clostridium acetobutylicum)).